Consider the following 63-residue polypeptide: Small ribosomal subunit protein eS31 (63 aa).

Zn(2+) contacts are provided by cysteine 31, cysteine 34, cysteine 50, and cysteine 53.

This sequence belongs to the eukaryotic ribosomal protein eS31 family. Part of the 30S ribosomal subunit. It depends on Zn(2+) as a cofactor.

In Aeropyrum pernix (strain ATCC 700893 / DSM 11879 / JCM 9820 / NBRC 100138 / K1), this protein is Small ribosomal subunit protein eS31 (rps27ae).